A 365-amino-acid chain; its full sequence is Phospho-N-acetylmuramoyl-pentapeptide-transferase (365 aa).

A run of 10 helical transmembrane segments spans residues 22–42 (YISVRIIMISITSLLITLALG), 74–94 (TMGGVLILSSVIISCLLWGDL), 95–115 (TSIYLWILILVVIFFGAIGFF), 133–153 (YKFALQSIFSIVLAIVLFYLL), 168–188 (SLYIPIGIVIFVVLAFFIING), 201–221 (GLAIVPVVLVAAGLGIYAYIE), 240–260 (LAEVAVFCAAVCGSGLAFLWF), 267–287 (VFMGDVGSLTLGAVLGVIAVM), 292–312 (LIFFIMGLLFVVEALSVMLQV), and 342–362 (KVVIRFWIISLILFLIGLAAI).

This sequence belongs to the glycosyltransferase 4 family. MraY subfamily. It depends on Mg(2+) as a cofactor.

It is found in the cell inner membrane. The enzyme catalyses UDP-N-acetyl-alpha-D-muramoyl-L-alanyl-gamma-D-glutamyl-meso-2,6-diaminopimeloyl-D-alanyl-D-alanine + di-trans,octa-cis-undecaprenyl phosphate = di-trans,octa-cis-undecaprenyl diphospho-N-acetyl-alpha-D-muramoyl-L-alanyl-D-glutamyl-meso-2,6-diaminopimeloyl-D-alanyl-D-alanine + UMP. The protein operates within cell wall biogenesis; peptidoglycan biosynthesis. In terms of biological role, catalyzes the initial step of the lipid cycle reactions in the biosynthesis of the cell wall peptidoglycan: transfers peptidoglycan precursor phospho-MurNAc-pentapeptide from UDP-MurNAc-pentapeptide onto the lipid carrier undecaprenyl phosphate, yielding undecaprenyl-pyrophosphoryl-MurNAc-pentapeptide, known as lipid I. In Francisella tularensis subsp. tularensis (strain FSC 198), this protein is Phospho-N-acetylmuramoyl-pentapeptide-transferase.